A 223-amino-acid chain; its full sequence is Probable 3-beta-hydroxysteroid-Delta(8),Delta(7)-isomerase (223 aa).

The next 4 helical transmembrane spans lie at 28-48, 58-78, 115-135, and 175-195; these read IVSIYLGSSLLVVSLVWLLFG, LMCWWTFTGLTHVILEGYFVF, VEGITAVIVGPASLLAIYAIA, and FYYYSYYIGANCWWVLIPSLI. Residues 54 to 196 enclose the EXPERA domain; it reads LDKLLMCWWT…WWVLIPSLIS (143 aa).

It belongs to the EBP family.

The protein resides in the endoplasmic reticulum membrane. The enzyme catalyses lathosterol = 5alpha-cholest-8-en-3beta-ol. The protein operates within steroid biosynthesis; sterol biosynthesis. Its function is as follows. Catalyzes the conversion of Delta(8)-sterols to their corresponding Delta(7)-isomers. The chain is Probable 3-beta-hydroxysteroid-Delta(8),Delta(7)-isomerase from Arabidopsis thaliana (Mouse-ear cress).